A 152-amino-acid polypeptide reads, in one-letter code: Large ribosomal subunit protein uL11 (152 aa).

Belongs to the universal ribosomal protein uL11 family. In terms of assembly, part of the ribosomal stalk of the 50S ribosomal subunit. Interacts with L10 and the large rRNA to form the base of the stalk. L10 forms an elongated spine to which L12 dimers bind in a sequential fashion forming a multimeric L10(L12)X complex. In terms of processing, one or more lysine residues are methylated.

Functionally, forms part of the ribosomal stalk which helps the ribosome interact with GTP-bound translation factors. The sequence is that of Large ribosomal subunit protein uL11 from Mycoplasmoides gallisepticum (strain R(low / passage 15 / clone 2)) (Mycoplasma gallisepticum).